Reading from the N-terminus, the 556-residue chain is MNIVEQMKDVLKQEIKEAVMKAGLAEESEIPEVVLEVPKDKSHGDYSTNMAMQLARIAKKAPRNIAEEIVASFDKGKASIDKLDIAGPGFINFYMNNQYLTKLIPAVLEAGEAYGETNIGGGERVQVEFVSANPTGNLHLGHARGAAVGDSLCNVLEKAGYEVSREYYINDAGNQINNLALSVEARYFQALGKDKPMPEDGYHGEDIKEIGQKLADEFGDRFVHEEESERLAFFREYGLKYELGKLREDLENFRVPFDVWYSETSLYQNGKIDQALEALREKGHIYEEDGATWFRSTAFGDDKDRVLIKKDGSYTYLLPDIAYHKDKLDRGFQKLINVWGADHHGYIPRMKAAIEALGYDKETLEVEIIQLVHLYKNGEKMKMSKRTGKAVTMRDLIDEVGLDAVRYFFAMRSADTHMDFDLDLAVSTSNENPVYYAQYAHARICSMLRQGEEKGISFEGNLDLTKIGSEKEYDLLKVIGSFPEAVADAAEKRIPHRITNYIFELASVLHSFYNAEKVLDPADEEKSRARLSLMKATQITLNNALKLIGVSAPEKM.

The 'HIGH' region signature appears at 132-142; that stretch reads ANPTGNLHLGH.

It belongs to the class-I aminoacyl-tRNA synthetase family. In terms of assembly, monomer.

The protein resides in the cytoplasm. The enzyme catalyses tRNA(Arg) + L-arginine + ATP = L-arginyl-tRNA(Arg) + AMP + diphosphate. This chain is Arginine--tRNA ligase, found in Bacillus licheniformis (strain ATCC 14580 / DSM 13 / JCM 2505 / CCUG 7422 / NBRC 12200 / NCIMB 9375 / NCTC 10341 / NRRL NRS-1264 / Gibson 46).